A 497-amino-acid polypeptide reads, in one-letter code: tRNA (adenine(58)-N(1))-methyltransferase non-catalytic subunit TRM6 (497 aa).

2 disordered regions span residues 1-20 and 69-100; these read MEGSGEQPGPQPQHPGDHRI and TSGGSLQPKKKREEPTAETKEAGTDNRNIVDD. A compositionally biased stretch (basic and acidic residues) spans 79 to 100; that stretch reads KREEPTAETKEAGTDNRNIVDD. Position 94–104 (94–104) interacts with substrate; the sequence is NRNIVDDGKSQ. A Phosphothreonine modification is found at threonine 107. Substrate is bound by residues 145–154 and 175–182; these read KYIKKKKKKY and REPGKINH. Positions 276-354 are disordered; sequence SSEPKDSALV…EKQRRQEEQR (79 aa). A phosphoserine mark is found at serine 298 and serine 305. Residues 327–354 are compositionally biased toward basic and acidic residues; it reads DPEHKGPKERGSKKDYIQEKQRRQEEQR. Residues arginine 349, arginine 377, 415–423, and 434–441 contribute to the substrate site; these read RERGGVINL and QVLPDRSH. The segment at 472–497 is disordered; it reads SNASTLESHETEEPAAKKRKCPESDS. Over residues 478–497 the composition is skewed to basic and acidic residues; that stretch reads ESHETEEPAAKKRKCPESDS.

The protein belongs to the TRM6/GCD10 family. In terms of assembly, heterotetramer; composed of two copies of TRMT6 and two copies of TRMT61A. Expressed in brain, liver, testis and ovary.

It is found in the nucleus. Substrate-binding subunit of tRNA (adenine-N(1)-)-methyltransferase, which catalyzes the formation of N(1)-methyladenine at position 58 (m1A58) in initiator methionyl-tRNA. Together with the TRMT61A catalytic subunit, part of a mRNA N(1)-methyltransferase complex that mediates methylation of adenosine residues at the N(1) position of a small subset of mRNAs: N(1) methylation takes place in tRNA T-loop-like structures of mRNAs and is only present at low stoichiometries. The sequence is that of tRNA (adenine(58)-N(1))-methyltransferase non-catalytic subunit TRM6 (TRMT6) from Homo sapiens (Human).